The chain runs to 345 residues: Probable aldo-keto reductase 3 (345 aa).

Y63 (proton donor) is an active-site residue. H130 is a substrate binding site. 209-219 (SPLGRGFFASG) lines the NADP(+) pocket.

Belongs to the aldo/keto reductase family.

The chain is Probable aldo-keto reductase 3 from Arabidopsis thaliana (Mouse-ear cress).